We begin with the raw amino-acid sequence, 631 residues long: Transforming acidic coiled-coil-containing protein 3 (631 aa).

The residue at position 2 (S2) is an N-acetylserine. S39 bears the Phosphoserine mark. A compositionally biased stretch (polar residues) spans 42 to 59 (ENVPPQSQAKATNVTFQT). Residues 42–70 (ENVPPQSQAKATNVTFQTPPRDPQTHRIL) form a disordered region. S71 is subject to Phosphoserine. Necessary but not sufficient for spindle localization regions lie at residues 311 to 366 (EESF…PMPV) and 384 to 631 (KPTE…MEKI). S347 bears the Phosphoserine; by AURKA mark. A disordered region spans residues 363–385 (PMPVAPITNSTQDTEEESGSGKP). Residues 431–630 (QKDLDAVVNV…CDDLISKMEK (200 aa)) are a coiled coil.

The protein belongs to the TACC family. As to quaternary structure, interacts with GCN5L2 and PCAF. The coiled coil C-terminal region interacts with AH receptor nuclear translocator protein (ARNT) and ARNT2. Interacts with CCDC100/CEP120. Interacts with CKAP5 independently of clathrin. Interacts with CKAP5 and clathrin forming the TACC3/ch-TOG/clathrin complex located at spindle inter-microtubules bridges; TACC3 (phosphorylated at Ser-347 by AURKA) and CLTC are proposed to form a composite microtubule interaction surface. In terms of tissue distribution, embryonically expressed.

The protein localises to the cytoplasm. It is found in the cytoskeleton. It localises to the microtubule organizing center. The protein resides in the centrosome. Its subcellular location is the spindle pole. Plays a role in the microtubule-dependent coupling of the nucleus and the centrosome. Involved in the processes that regulate centrosome-mediated interkinetic nuclear migration (INM) of neural progenitors. Acts as a component of the TACC3/ch-TOG/clathrin complex proposed to contribute to stabilization of kinetochore fibers of the mitotic spindle by acting as inter-microtubule bridge. The TACC3/ch-TOG/clathrin complex is required for the maintenance of kinetochore fiber tension. May be involved in the control of cell growth and differentiation. May have a role in embryonic development. In Mus musculus (Mouse), this protein is Transforming acidic coiled-coil-containing protein 3 (Tacc3).